The following is a 104-amino-acid chain: Nucleoid-associated protein EF_2780 (104 aa).

The protein belongs to the YbaB/EbfC family. Homodimer.

It is found in the cytoplasm. The protein localises to the nucleoid. Its function is as follows. Binds to DNA and alters its conformation. May be involved in regulation of gene expression, nucleoid organization and DNA protection. The sequence is that of Nucleoid-associated protein EF_2780 from Enterococcus faecalis (strain ATCC 700802 / V583).